The following is a 431-amino-acid chain: Glutamate-1-semialdehyde 2,1-aminomutase (431 aa).

At Lys-269 the chain carries N6-(pyridoxal phosphate)lysine.

This sequence belongs to the class-III pyridoxal-phosphate-dependent aminotransferase family. HemL subfamily. Homodimer. Pyridoxal 5'-phosphate is required as a cofactor.

It localises to the cytoplasm. The enzyme catalyses (S)-4-amino-5-oxopentanoate = 5-aminolevulinate. It functions in the pathway porphyrin-containing compound metabolism; protoporphyrin-IX biosynthesis; 5-aminolevulinate from L-glutamyl-tRNA(Glu): step 2/2. Its pathway is porphyrin-containing compound metabolism; chlorophyll biosynthesis. The polypeptide is Glutamate-1-semialdehyde 2,1-aminomutase (Chlorobaculum tepidum (strain ATCC 49652 / DSM 12025 / NBRC 103806 / TLS) (Chlorobium tepidum)).